Reading from the N-terminus, the 566-residue chain is Unconventional myosin-VIIa (566 aa).

One can recognise a Myosin motor domain in the interval M67–G566. Position 160–167 (G160–T167) interacts with ATP.

This sequence belongs to the TRAFAC class myosin-kinesin ATPase superfamily. Myosin family. As to quaternary structure, might homodimerize in a two headed molecule through the formation of a coiled-coil rod. Identified in a complex with USH1C and USH1G. Interacts with MYRIP. Interacts with RPE65. Interacts with CIB2. May interact with CALM. Interacts with WHRN. Interacts with PLEKHB1 (via PH domain). Interacts with PCDH15. Interacts with TWF2. Interacts with USH1G. Interacts with MYH9. Interacts (via MyTH4-FERM domains) with cytoplasmic regions of ADGRV1 and USH2A. Interacts with PDZD7 (via MyTH4-FERM domains). Interacts with CALML4.

The protein resides in the cytoplasm. It localises to the cell cortex. The protein localises to the cytoskeleton. It is found in the synapse. Its function is as follows. Myosins are actin-based motor molecules with ATPase activity. Unconventional myosins serve in intracellular movements. Their highly divergent tails bind to membranous compartments, which are then moved relative to actin filaments. In the retina, plays an important role in the renewal of the outer photoreceptor disks. Plays an important role in the distribution and migration of retinal pigment epithelial (RPE) melanosomes and phagosomes, and in the regulation of opsin transport in retinal photoreceptors. In the inner ear, plays an important role in differentiation, morphogenesis and organization of cochlear hair cell bundles. Motor protein that is a part of the functional network formed by USH1C, USH1G, CDH23 and MYO7A that mediates mechanotransduction in cochlear hair cells. Required for normal hearing. Involved in hair-cell vesicle trafficking of aminoglycosides, which are known to induce ototoxicity. In Sus scrofa (Pig), this protein is Unconventional myosin-VIIa (MYO7A).